The sequence spans 559 residues: Chaperonin GroEL 3 (559 aa).

Residues 88–92, glycine 426, and aspartate 507 each bind ATP; that span reads DGTTT.

Belongs to the chaperonin (HSP60) family. In terms of assembly, forms a cylinder of 14 subunits composed of two heptameric rings stacked back-to-back. Interacts with the co-chaperonin GroES.

It is found in the cytoplasm. The catalysed reaction is ATP + H2O + a folded polypeptide = ADP + phosphate + an unfolded polypeptide.. Its function is as follows. Together with its co-chaperonin GroES, plays an essential role in assisting protein folding. The GroEL-GroES system forms a nano-cage that allows encapsulation of the non-native substrate proteins and provides a physical environment optimized to promote and accelerate protein folding. The sequence is that of Chaperonin GroEL 3 from Methylococcus capsulatus (strain ATCC 33009 / NCIMB 11132 / Bath).